We begin with the raw amino-acid sequence, 354 residues long: Sulfate/thiosulfate import ATP-binding protein CysA (354 aa).

The 235-residue stretch at Ile3–Leu237 folds into the ABC transporter domain. Residue Gly35–Thr42 coordinates ATP.

It belongs to the ABC transporter superfamily. Sulfate/tungstate importer (TC 3.A.1.6) family. In terms of assembly, the complex is composed of two ATP-binding proteins (CysA), two transmembrane proteins (CysT and CysW) and a solute-binding protein (CysP).

It is found in the cell inner membrane. The catalysed reaction is sulfate(out) + ATP + H2O = sulfate(in) + ADP + phosphate + H(+). It carries out the reaction thiosulfate(out) + ATP + H2O = thiosulfate(in) + ADP + phosphate + H(+). Functionally, part of the ABC transporter complex CysAWTP involved in sulfate/thiosulfate import. Responsible for energy coupling to the transport system. The sequence is that of Sulfate/thiosulfate import ATP-binding protein CysA from Bordetella parapertussis (strain 12822 / ATCC BAA-587 / NCTC 13253).